A 168-amino-acid polypeptide reads, in one-letter code: Pathogenesis-related protein 1B (168 aa).

The signal sequence occupies residues Met1–Ala30. Residues Leu38 to Tyr156 enclose the SCP domain.

It belongs to the CRISP family. Three disulfide bonds are present.

The protein resides in the vacuole. In terms of biological role, probably involved in the defense reaction of plants against pathogens. The sequence is that of Pathogenesis-related protein 1B from Nicotiana tabacum (Common tobacco).